The primary structure comprises 192 residues: Phosphoheptose isomerase (192 aa).

The SIS domain occupies 35–192 (LIETLENQGK…CIERHFAHKN (158 aa)). A substrate-binding site is contributed by 50-52 (NGG). Positions 59 and 63 each coordinate Zn(2+). Residues Glu-63, 92–93 (ND), 118–120 (STS), Ser-123, and Gln-170 contribute to the substrate site. Residues Gln-170 and His-178 each coordinate Zn(2+).

This sequence belongs to the SIS family. GmhA subfamily. In terms of assembly, homotetramer. Zn(2+) is required as a cofactor.

It localises to the cytoplasm. The catalysed reaction is 2 D-sedoheptulose 7-phosphate = D-glycero-alpha-D-manno-heptose 7-phosphate + D-glycero-beta-D-manno-heptose 7-phosphate. It functions in the pathway carbohydrate biosynthesis; D-glycero-D-manno-heptose 7-phosphate biosynthesis; D-glycero-alpha-D-manno-heptose 7-phosphate and D-glycero-beta-D-manno-heptose 7-phosphate from sedoheptulose 7-phosphate: step 1/1. It participates in bacterial outer membrane biogenesis; LPS core biosynthesis. In terms of biological role, catalyzes the isomerization of sedoheptulose 7-phosphate in D-glycero-D-manno-heptose 7-phosphate. This is Phosphoheptose isomerase from Helicobacter pylori (strain ATCC 700392 / 26695) (Campylobacter pylori).